Reading from the N-terminus, the 259-residue chain is UPF0246 protein ABBFA_001173 (259 aa).

The protein belongs to the UPF0246 family.

The protein is UPF0246 protein ABBFA_001173 of Acinetobacter baumannii (strain AB307-0294).